The following is a 231-amino-acid chain: Cytochrome c oxidase assembly factor 7 (231 aa).

Sel1-like repeat units lie at residues 34–66 (PDGC…DQNE), 68–104 (SESC…NKGG), 108–145 (IDSC…DGNF), 146–182 (AASC…SLGH), and 183–218 (MWGC…DLHR).

Belongs to the hcp beta-lactamase family.

It localises to the mitochondrion intermembrane space. Functionally, may be required for assembly of mitochondrial respiratory chain complexes. In Xenopus tropicalis (Western clawed frog), this protein is Cytochrome c oxidase assembly factor 7 (coa7).